The sequence spans 368 residues: Isopentenyl-diphosphate delta-isomerase (368 aa).

Residue 7–8 participates in substrate binding; that stretch reads RK. FMN is bound by residues Thr65, 66-68, Ser96, and Asn125; that span reads GMT. 96–98 is a substrate binding site; the sequence is SQR. Gln160 serves as a coordination point for substrate. Residue Glu161 participates in Mg(2+) binding. FMN-binding positions include Lys193, Ser218, Thr223, 275–277, and 296–297; these read GIR and AL.

The protein belongs to the IPP isomerase type 2 family. Homooctamer. Dimer of tetramers. Requires FMN as cofactor. The cofactor is NADPH. Mg(2+) serves as cofactor.

It is found in the cytoplasm. It catalyses the reaction isopentenyl diphosphate = dimethylallyl diphosphate. Involved in the biosynthesis of isoprenoids. Catalyzes the 1,3-allylic rearrangement of the homoallylic substrate isopentenyl (IPP) to its allylic isomer, dimethylallyl diphosphate (DMAPP). This Saccharolobus shibatae (strain ATCC 51178 / DSM 5389 / JCM 8931 / NBRC 15437 / B12) (Sulfolobus shibatae) protein is Isopentenyl-diphosphate delta-isomerase.